Consider the following 368-residue polypeptide: Cobalt-precorrin-5B C(1)-methyltransferase (368 aa).

Belongs to the CbiD family.

The catalysed reaction is Co-precorrin-5B + S-adenosyl-L-methionine = Co-precorrin-6A + S-adenosyl-L-homocysteine. Its pathway is cofactor biosynthesis; adenosylcobalamin biosynthesis; cob(II)yrinate a,c-diamide from sirohydrochlorin (anaerobic route): step 6/10. Its function is as follows. Catalyzes the methylation of C-1 in cobalt-precorrin-5B to form cobalt-precorrin-6A. This Brucella anthropi (strain ATCC 49188 / DSM 6882 / CCUG 24695 / JCM 21032 / LMG 3331 / NBRC 15819 / NCTC 12168 / Alc 37) (Ochrobactrum anthropi) protein is Cobalt-precorrin-5B C(1)-methyltransferase.